Here is a 183-residue protein sequence, read N- to C-terminus: Pyruvoyl-dependent arginine decarboxylase 2 (183 aa).

Residue serine 41 is modified to Pyruvic acid (Ser).

Belongs to the PdaD family. Requires pyruvate as cofactor.

It catalyses the reaction L-arginine + H(+) = agmatine + CO2. The polypeptide is Pyruvoyl-dependent arginine decarboxylase 2 (pdaD2) (Methanosarcina acetivorans (strain ATCC 35395 / DSM 2834 / JCM 12185 / C2A)).